A 99-amino-acid polypeptide reads, in one-letter code: Large ribosomal subunit protein uL23 (99 aa).

Belongs to the universal ribosomal protein uL23 family. As to quaternary structure, part of the 50S ribosomal subunit. Contacts protein L29, and trigger factor when it is bound to the ribosome.

In terms of biological role, one of the early assembly proteins it binds 23S rRNA. One of the proteins that surrounds the polypeptide exit tunnel on the outside of the ribosome. Forms the main docking site for trigger factor binding to the ribosome. The chain is Large ribosomal subunit protein uL23 from Psychromonas ingrahamii (strain DSM 17664 / CCUG 51855 / 37).